We begin with the raw amino-acid sequence, 161 residues long: Nucleotide-binding protein LHK_01423 (161 aa).

It belongs to the YajQ family.

In terms of biological role, nucleotide-binding protein. This chain is Nucleotide-binding protein LHK_01423, found in Laribacter hongkongensis (strain HLHK9).